The primary structure comprises 510 residues: Histidine ammonia-lyase (510 aa).

A cross-link (5-imidazolinone (Ala-Gly)) is located at residues 143–145 (ASG). Position 144 is a 2,3-didehydroalanine (Ser) (serine 144).

This sequence belongs to the PAL/histidase family. In terms of processing, contains an active site 4-methylidene-imidazol-5-one (MIO), which is formed autocatalytically by cyclization and dehydration of residues Ala-Ser-Gly.

Its subcellular location is the cytoplasm. It catalyses the reaction L-histidine = trans-urocanate + NH4(+). It functions in the pathway amino-acid degradation; L-histidine degradation into L-glutamate; N-formimidoyl-L-glutamate from L-histidine: step 1/3. This Shewanella pealeana (strain ATCC 700345 / ANG-SQ1) protein is Histidine ammonia-lyase.